A 245-amino-acid polypeptide reads, in one-letter code: Ribonuclease PH (245 aa).

Phosphate-binding positions include arginine 87 and 125–127 (GTR).

Belongs to the RNase PH family. Homohexameric ring arranged as a trimer of dimers.

It catalyses the reaction tRNA(n+1) + phosphate = tRNA(n) + a ribonucleoside 5'-diphosphate. In terms of biological role, phosphorolytic 3'-5' exoribonuclease that plays an important role in tRNA 3'-end maturation. Removes nucleotide residues following the 3'-CCA terminus of tRNAs; can also add nucleotides to the ends of RNA molecules by using nucleoside diphosphates as substrates, but this may not be physiologically important. Probably plays a role in initiation of 16S rRNA degradation (leading to ribosome degradation) during starvation. This Streptomyces coelicolor (strain ATCC BAA-471 / A3(2) / M145) protein is Ribonuclease PH.